The sequence spans 439 residues: Kelch domain-containing protein 10 (439 aa).

The tract at residues 1-50 (MSAAQGWDRNRRRGGGAAGGASGVSGAGAAGGGRGTGQLNRFVQLSGRPH) is disordered. The residue at position 13 (arginine 13) is an Omega-N-methylarginine. Positions 15–36 (GGAAGGASGVSGAGAAGGGRGT) are enriched in gly residues. 6 Kelch repeats span residues 87–154 (PARS…LASM), 155–198 (SLVL…SCRG), 199–260 (KRPS…RYRH), 261–319 (EIAH…HSCV), 320–364 (QIKN…VYFH), and 365–403 (CAAVTPAGCMYIHGGVVNIHENKRTGSLFKIWLVVPSLL). The interval 398–439 (VVPSLLELAWEKLLAAFPNLANLSRTQLLHLGLTQELIERLK) is interaction with CUL2.

This sequence belongs to the KLHDC10 family. In terms of assembly, component of a CRL2 E3 ubiquitin-protein ligase complex, also named ECS (Elongin BC-CUL2/5-SOCS-box protein) complex, composed of CUL2, Elongin BC (ELOB and ELOC), RBX1 and substrate-specific adapter KLHDC10. Interacts (via the 6 Kelch repeats) with PPP5C.

Its subcellular location is the nucleus. It localises to the cytoplasm. It participates in protein modification; protein ubiquitination. Its function is as follows. Substrate-recognition component of a Cul2-RING (CRL2) E3 ubiquitin-protein ligase complex of the DesCEND (destruction via C-end degrons) pathway, which recognizes a C-degron located at the extreme C-terminus of target proteins, leading to their ubiquitination and degradation. The C-degron recognized by the DesCEND pathway is usually a motif of less than ten residues and can be present in full-length proteins, truncated proteins or proteolytically cleaved forms. The CRL2(KLHDC10) complex specifically recognizes proteins with a proline-glycine (Pro-Gly) or an alanine tail (CAT tail) at the C-terminus, leading to their ubiquitination and degradation. The CRL2(KLHDC10) complex is involved in the ribosome-associated quality control (RQC) pathway, which mediates the extraction of incompletely synthesized nascent chains from stalled ribosomes: CRL2(KLHDC10) acts downstream of NEMF and recognizes CAT tails associated with stalled nascent chains, leading to their ubiquitination and degradation. Participates in the oxidative stress-induced cell death through MAP3K5 activation. Inhibits PPP5C phosphatase activity on MAP3K5. Acts as a regulator of necroptosis. The polypeptide is Kelch domain-containing protein 10 (Mus musculus (Mouse)).